The sequence spans 283 residues: Acetylglutamate kinase (283 aa).

Residues 63-64 (GG), Arg85, and Asn178 contribute to the substrate site.

Belongs to the acetylglutamate kinase family. ArgB subfamily.

It localises to the cytoplasm. It carries out the reaction N-acetyl-L-glutamate + ATP = N-acetyl-L-glutamyl 5-phosphate + ADP. It functions in the pathway amino-acid biosynthesis; L-arginine biosynthesis; N(2)-acetyl-L-ornithine from L-glutamate: step 2/4. Catalyzes the ATP-dependent phosphorylation of N-acetyl-L-glutamate. The polypeptide is Acetylglutamate kinase (Prochlorococcus marinus (strain AS9601)).